The following is a 312-amino-acid chain: MSPSKKILVLLLFPILLVSSHPIPAEDPAKQCNLSEDDLTKLKAAISSASSAKAANEDILPSTTLAACPMLKNFTEMLKTVATDMEVLKTQGVSNMEVQLLRESFEEKLNDLAKNKDIFERQANQDTSKAEGEMVEKINKLQLEMAKLQEEIEEQTKQMYVDMIEYIFERLKMNDTEAIDSYAQIVMKTKMHELIMKLKTDRLVLWEMVKYVEGKKNKWVGRKVLNTILDQVNKLKLYKPEEVEIGKNSLVVVWCWKFNSETVYGTTDEDQKSFHLAKLFFPKEKGCKECADVKSRTMCNNDYPKVMVKAFG.

A signal peptide spans 1 to 20 (MSPSKKILVLLLFPILLVSS). Residues 95 to 158 (NMEVQLLRES…QEEIEEQTKQ (64 aa)) are a coiled coil.

The protein belongs to the salivary protein SG34 family. As to expression, female salivary gland (at protein level). Low-level expression in ovary.

In terms of biological role, possible serine protease. Functionally, (Microbial infection) Modulates replication of duck Tembusu virus in salivary glands and virus release into the saliva, probably via the regulation of antimicrobial peptides expression in response to virus infection. (Microbial infection) Enhances replication of dengue virus type 2 in human keratinocytes, probably by suppressing the production of type I interferons and antimicrobial peptides in response to virus infection. The protein is Salivary protein SG34 of Aedes aegypti (Yellowfever mosquito).